We begin with the raw amino-acid sequence, 132 residues long: Phosphoribosyl-AMP cyclohydrolase (132 aa).

A Mg(2+)-binding site is contributed by D86. A Zn(2+)-binding site is contributed by C87. Mg(2+) contacts are provided by D88 and D90. Zn(2+) is bound by residues C103 and C110.

This sequence belongs to the PRA-CH family. In terms of assembly, homodimer. Requires Mg(2+) as cofactor. Zn(2+) is required as a cofactor.

It is found in the cytoplasm. It carries out the reaction 1-(5-phospho-beta-D-ribosyl)-5'-AMP + H2O = 1-(5-phospho-beta-D-ribosyl)-5-[(5-phospho-beta-D-ribosylamino)methylideneamino]imidazole-4-carboxamide. The protein operates within amino-acid biosynthesis; L-histidine biosynthesis; L-histidine from 5-phospho-alpha-D-ribose 1-diphosphate: step 3/9. In terms of biological role, catalyzes the hydrolysis of the adenine ring of phosphoribosyl-AMP. The protein is Phosphoribosyl-AMP cyclohydrolase of Haloquadratum walsbyi (strain DSM 16790 / HBSQ001).